Here is a 176-residue protein sequence, read N- to C-terminus: Heme oxygenase HutZ (176 aa).

Residue histidine 170 participates in heme binding.

Belongs to the heme oxygenase HugZ/HutZ family. As to quaternary structure, homodimer. Interacts with HutX, leading to the transfer of the heme from HutX to apo-HutZ.

It catalyses the reaction heme b + 3 AH2 + 3 O2 + 2 H(+) = biliverdin IXbeta + CO + Fe(2+) + 3 A + 3 H2O. The catalysed reaction is heme b + 3 AH2 + 3 O2 + 3 H(+) = biliverdin IXdelta + CO + Fe(2+) + 3 A + 3 H2O. With respect to regulation, activity is pH-dependent. A proximal hydrogen bond between Asp-132 and the heme axial ligant His-170 is essential for heme degradation activity. Heme-degradation reaction is inhibited by iron chelators. Involved in heme degradation. Catalyzes the degradation of heme to biliverdin, with the release of iron. Forms biliverdin beta and delta. Binds heme with high efficiency. This Vibrio cholerae serotype O1 (strain ATCC 39315 / El Tor Inaba N16961) protein is Heme oxygenase HutZ.